The primary structure comprises 183 residues: Lipocalin (183 aa).

A signal peptide spans 1–20 (MKGLVLSFALVALSALCVYG). Cysteine 83 and cysteine 179 are disulfide-bonded.

Belongs to the calycin superfamily. Lipocalin family. Monomer. In terms of tissue distribution, expressed mainly in choroid plexus. Much lower expression in other brain areas, and absent from liver.

The protein resides in the secreted. Functionally, might have a transport function across the blood brain barrier. Is supposed to have similar functions as a transthyretin which must have evolved after the stage of the amphibians in evolution. The polypeptide is Lipocalin (Rhinella marina (Cane toad)).